The following is a 227-amino-acid chain: tRNA (guanine-N(1)-)-methyltransferase (227 aa).

S-adenosyl-L-methionine is bound by residues glycine 112 and 132–137 (IGDFIL).

This sequence belongs to the RNA methyltransferase TrmD family. As to quaternary structure, homodimer.

It localises to the cytoplasm. The catalysed reaction is guanosine(37) in tRNA + S-adenosyl-L-methionine = N(1)-methylguanosine(37) in tRNA + S-adenosyl-L-homocysteine + H(+). In terms of biological role, specifically methylates guanosine-37 in various tRNAs. In Sulfurovum sp. (strain NBC37-1), this protein is tRNA (guanine-N(1)-)-methyltransferase.